A 209-amino-acid chain; its full sequence is High mobility group protein B2 (209 aa).

An N6-acetyllysine modification is found at Lys3. Residues 9 to 79 (PRGKMSSYAF…RYDREMKNYV (71 aa)) constitute a DNA-binding region (HMG box 1). Cys23 carries the post-translational modification Cysteine sulfonic acid (-SO3H); alternate. Residues Cys23 and Cys45 are joined by a disulfide bond. Lys30 carries the post-translational modification N6-acetyllysine. Position 35 is a phosphoserine (Ser35). Lys43 carries the post-translational modification N6-acetyllysine. A Cysteine sulfonic acid (-SO3H); alternate modification is found at Cys45. Basic and acidic residues predominate over residues 52 to 76 (MSAKEKSKFEDMAKSDKARYDREMK). Disordered stretches follow at residues 52–150 (MSAK…KAAK) and 162–209 (YRAK…EDEE). Position 90 is an N6-acetyllysine (Lys90). Residues 95–163 (PKRPPSAFFL…KYEKDIAAYR (69 aa)) constitute a DNA-binding region (HMG box 2). Ser100 bears the Phosphoserine mark. Position 106 is a cysteine sulfonic acid (-SO3H) (Cys106). 3 stretches are compositionally biased toward basic and acidic residues: residues 107-117 (SEHRPKIKSEH), 137-150 (SAKD…KAAK), and 162-172 (YRAKGKSEAGK). N6-acetyllysine is present on residues Lys114 and Lys141. A required for chemotactic activity region spans residues 165-180 (KGKSEAGKKGPGRPTG). A compositionally biased stretch (acidic residues) spans 187-209 (PEDEEEEEEEEDEDEEEEDEDEE).

Belongs to the HMGB family. As to quaternary structure, interacts with POU2F2, POU2F1 and POU3F1. Component of the RAG complex composed of core components RAG1 and RAG2, and associated component HMGB1 or HMGB2. Component of the SET complex, composed of at least ANP32A, APEX1, HMGB2, NME1, SET and TREX1. Directly interacts with SET. Interacts with LEF1. Post-translationally, reduction/oxidation of cysteine residues Cys-23, Cys-45 and Cys-106 and a possible intramolecular disulfide bond involving Cys-23 and Cys-45 give rise to different redox forms with specific functional activities in various cellular compartments: 1- fully reduced HMGB2 (HMGB2C23hC45hC106h), 2- disulfide HMGB2 (HMGB2C23-C45C106h) and 3- sulfonyl HMGB2 (HMGB2C23soC45soC106so).

The protein localises to the nucleus. The protein resides in the chromosome. Its subcellular location is the cytoplasm. It localises to the secreted. Multifunctional protein with various roles in different cellular compartments. May act in a redox sensitive manner. In the nucleus is an abundant chromatin-associated non-histone protein involved in transcription, chromatin remodeling and V(D)J recombination and probably other processes. Binds DNA with a preference to non-canonical DNA structures such as single-stranded DNA. Can bent DNA and enhance DNA flexibility by looping thus providing a mechanism to promote activities on various gene promoters by enhancing transcription factor binding and/or bringing distant regulatory sequences into close proximity. Involved in V(D)J recombination by acting as a cofactor of the RAG complex: acts by stimulating cleavage and RAG protein binding at the 23 bp spacer of conserved recombination signal sequences (RSS). Proposed to be involved in the innate immune response to nucleic acids by acting as a cytoplasmic promiscuous immunogenic DNA/RNA sensor which cooperates with subsequent discriminative sensing by specific pattern recognition receptors. In the extracellular compartment acts as a chemokine. Promotes proliferation and migration of endothelial cells implicating AGER/RAGE. Has antimicrobial activity in gastrointestinal epithelial tissues. Involved in inflammatory response to antigenic stimulus coupled with pro-inflammatory activity. May play a role in germ cell differentiation. Involved in modulation of neurogenesis probably by regulation of neural stem proliferation. Involved in articular cartilage surface maintenance implicating LEF1 and the Wnt/beta-catenin pathway. This chain is High mobility group protein B2 (HMGB2), found in Bos taurus (Bovine).